We begin with the raw amino-acid sequence, 614 residues long: Vitamin B12 transporter BtuB (614 aa).

The signal sequence occupies residues 1 to 20; it reads MIKKASLLTACSVTAFSAWA. The TonB box signature appears at 26–33; the sequence is DTLVVTAI. The 115-residue stretch at 38-152 folds into the TBDR plug domain; the sequence is PRSTVLAPTT…IGGVVNIITT (115 aa). Residues Leu83, Ser85, Asn92, and 110 to 111 contribute to the cyanocob(III)alamin site; that span reads VS. One can recognise a TBDR beta-barrel domain in the interval 155–614; the sequence is EPGTEISAGW…EYTLSGSYTF (460 aa). Beta stranded transmembrane passes span 158–165, 169–178, and 184–195; these read TEISAGWG, YQNYDVSTQQ, and TRVTLLGDYAHT. Ca(2+) is bound by residues Asp199, Gln211, Asp213, and Asp215. A run of 2 beta stranded transmembrane segments spans residues 217–227 and 232–248; these read FLSKTLYGALE and DAWS…NRTN. The Ca(2+) site is built by Tyr249 and Asp250. Ala251 lines the cyanocob(III)alamin pocket. Asp261 lines the Ca(2+) pocket. A run of 14 beta stranded transmembrane segments spans residues 263-277, 279-296, 309-325, 328-337, 353-369, 371-381, 385-400, 403-417, 434-443, 449-458, 473-490, 494-509, 517-529, and 535-550; these read RKLY…LRYN, ELIK…KDYN, TLDE…NNVI, HGSIGAGVDW, YDQR…QQVG, FTFEGAARSDD, FGRH…WEFI, YRFI…KAPN, KSKQWEGAFE, VNWRISGYRN, YYNE…TANF, PLTH…ARNA, RRAK…QLDW, and DWGI…YDKD. A cyanocob(III)alamin-binding site is contributed by Thr309. Arg517 provides a ligand contact to cyanocob(III)alamin. A cyanocob(III)alamin-binding site is contributed by Tyr551. A run of 3 beta stranded transmembrane segments spans residues 558-572, 585-596, and 602-614; these read TVKM…LAVA, IANLFDKDYETV, and AGRE…SYTF. The short motif at 597 to 614 is the TonB C-terminal box element; the sequence is YGYQTAGREYTLSGSYTF.

It belongs to the TonB-dependent receptor family. BtuB (TC 1.B.14.3.1) subfamily.

It localises to the cell outer membrane. Its function is as follows. Involved in the active translocation of vitamin B12 (cyanocobalamin) across the outer membrane to the periplasmic space. It derives its energy for transport by interacting with the trans-periplasmic membrane protein TonB. In Shigella flexneri serotype 5b (strain 8401), this protein is Vitamin B12 transporter BtuB.